The sequence spans 275 residues: MPLMKFKPTSPGRRSAVRVVTPDLHKGAPHAALLDSQSKSGGRNHHGRITVRHVGGGHKQHYRIIDFKRNKEGIPARVERIEYDPNRTAHIALLCYVDGERCYIIAPKGLKAGDQVIAGANAPIKTGNTLPLRNIPVGTTVHGIELKPGKGAQIARAAGAAVQLVAREGIYATLRLRSGEMRKVPVECRATIGEVGNDEHNLEKLGKAGAKRWRGVRPTVRGAAMNPVDHPHGGGEAKAGQGNPHPVTPWGVPTKGYKTRKNKRTQQFIVRDRRG.

A disordered region spans residues 224–275 (AMNPVDHPHGGGEAKAGQGNPHPVTPWGVPTKGYKTRKNKRTQQFIVRDRRG).

Belongs to the universal ribosomal protein uL2 family. Part of the 50S ribosomal subunit. Forms a bridge to the 30S subunit in the 70S ribosome.

In terms of biological role, one of the primary rRNA binding proteins. Required for association of the 30S and 50S subunits to form the 70S ribosome, for tRNA binding and peptide bond formation. It has been suggested to have peptidyltransferase activity; this is somewhat controversial. Makes several contacts with the 16S rRNA in the 70S ribosome. The protein is Large ribosomal subunit protein uL2 of Xanthomonas oryzae pv. oryzae (strain MAFF 311018).